Consider the following 344-residue polypeptide: DNA polymerase IV (344 aa).

The region spanning 2–183 (IMLIDFDYFF…IKINDIPGIG (182 aa)) is the UmuC domain. The Mg(2+) site is built by Asp6 and Asp105. Glu106 is a catalytic residue.

Belongs to the DNA polymerase type-Y family. In terms of assembly, monomer. Mg(2+) serves as cofactor.

Its subcellular location is the cytoplasm. It carries out the reaction DNA(n) + a 2'-deoxyribonucleoside 5'-triphosphate = DNA(n+1) + diphosphate. Poorly processive, error-prone DNA polymerase involved in untargeted mutagenesis. Copies undamaged DNA at stalled replication forks, which arise in vivo from mismatched or misaligned primer ends. These misaligned primers can be extended by PolIV. Exhibits no 3'-5' exonuclease (proofreading) activity. May be involved in translesional synthesis. The protein is DNA polymerase IV of Picrophilus torridus (strain ATCC 700027 / DSM 9790 / JCM 10055 / NBRC 100828 / KAW 2/3).